The primary structure comprises 446 residues: Endoplasmic reticulum membrane adapter protein XK (446 aa).

The Cytoplasmic portion of the chain corresponds to 1-2 (MK). The chain crosses the membrane as a helical span at residues 3–23 (FPASVIASVFLFVAETAAALY). The Extracellular portion of the chain corresponds to 24 to 37 (LSSTYRSAGDRMWQ). A helical membrane pass occupies residues 38 to 58 (VLTLLFSLMPCALVQFTLLFV). Residues 59-68 (HRDLSRDRPL) lie on the Cytoplasmic side of the membrane. A helical transmembrane segment spans residues 69–89 (ALLMHLLQLGPLYRCCEVFCI). Over 90-140 (YCQSDQNEEPYVSITKKRQMPKDGLSEEVEKEVGQAEGKLITHRSAFSRAS) the chain is Extracellular. Ser115 carries the post-translational modification Phosphoserine. A helical transmembrane segment spans residues 141-161 (VIQAFLGSAPQLTLQLYITVL). Residues 162-171 (EQNITTGRCF) lie on the Cytoplasmic side of the membrane. Residues 172–192 (IMTLSLLSIVYGALRCNILAI) traverse the membrane as a helical segment. Over 193-208 (KIKYDEYEVKVKPLAY) the chain is Extracellular. Residues 209–229 (VCIFLWRSFEIATRVIVLVLF) form a helical membrane-spanning segment. The Cytoplasmic segment spans residues 230-235 (TSVLKI). Residues 236-256 (WVVAVILVNFFSFFLYPWIVF) traverse the membrane as a helical segment. Residues 257-277 (WCSGSPFPENIEKALSRVGTT) are Extracellular-facing. Residues 278–298 (IVLCFLTLLYAGINMFCWSAV) traverse the membrane as a helical segment. The Cytoplasmic segment spans residues 299 to 317 (QLKIDNPELISKSQNWYRL). Residues 318–338 (LIYYMTRFIENSVLLLLWYFF) traverse the membrane as a helical segment. At 339 to 349 (KTDIYMYVCAP) the chain is on the extracellular side. Residues 350–370 (LLILQLLIGYCTGILFMLVFY) form a helical membrane-spanning segment. Over 371–446 (QFFHPCKKLF…IWTAVDLCSA (76 aa)) the chain is Cytoplasmic.

The protein belongs to the XK family. Heterodimer with Kell; disulfide-linked. Interacts with VPS13A.

The protein localises to the endoplasmic reticulum membrane. Functionally, recruits the lipid transfer protein VPS13A from lipid droplets to the endoplasmic reticulum (ER) membrane. This chain is Endoplasmic reticulum membrane adapter protein XK, found in Mus musculus (Mouse).